A 96-amino-acid chain; its full sequence is UPF0235 protein YE3436 (96 aa).

Belongs to the UPF0235 family.

In Yersinia enterocolitica serotype O:8 / biotype 1B (strain NCTC 13174 / 8081), this protein is UPF0235 protein YE3436.